Consider the following 434-residue polypeptide: MKLFGSSGIRGIANKEITPELALNVGLVLGSRKKTAVIGRDPRVSAPMIEHALIAGMTATGCAVTEIGLVSTPTLAYAAREYECGVMVTASHNPSEYVGIKLWNPDGMAFDSAQQEEIEKAIEDADFSLVPWNLIGKFEEDGNAIRAHMNMIKKLVGSSSLKVVLDCGCGAGGTITPYLLQELGCEVITLNAQPDGHFPARNPEPNDENLTMLKKAVVDFGADLGIAHDGDADRMMAVDEKGNFVSGDEMLAIFGLYECSGKKGTVVVPVDTSMMVGDSLQGSEIVRTRVGDVYVAEGIKQSGAIYGGEPSGSWIFPKISYCPDGIYAAAKLVEIVKEKKLSELREELPRYATKRGALPCANDKKAEFMEKVKAKLEPLGKVLDIDGIRVEMDNGWVLVRPSGTEAKVRITAEARENVDEIFDMAEKIAKEALK.

S91 acts as the Phosphoserine intermediate in catalysis. 4 residues coordinate Mg(2+): S91, D229, D231, and D233. S91 carries the phosphoserine modification.

Belongs to the phosphohexose mutase family. Mg(2+) serves as cofactor. Activated by phosphorylation.

It carries out the reaction alpha-D-glucosamine 1-phosphate = D-glucosamine 6-phosphate. Catalyzes the conversion of glucosamine-6-phosphate to glucosamine-1-phosphate. The polypeptide is Probable phosphoglucosamine mutase (Methanosarcina barkeri (strain Fusaro / DSM 804)).